Reading from the N-terminus, the 307-residue chain is MSLLRLTFLGTSAAQPTLHRNLSGLAVKAHSDLLLFDCGEGSQRQMVRYGTGFTVDAVFFTHFHADHYLGIIGFLRTLGMTGRSEPIHLYGPPSAKRLLHQAVHLGVESMSFPVEIHELKDGDVVPRKGYAVHAVGVDHRINALGYALVEDDRPGRFNLDVARSLGVPEGPSFGKLQRGEPVTLEDGRTVKPEDVLGAPRPGRRLVISGDTRPCPALVKAAKDADLLVHESTFSDDEQERAVETRHSTAREAARVAREAGARRLVLTHLSSRHDTDPSKLLTQAREEYQGPVEVAFDGFTVELPLRD.

H62, H64, D66, H67, H139, D210, and H268 together coordinate Zn(2+). The Proton acceptor role is filled by D66.

Belongs to the RNase Z family. In terms of assembly, homodimer. Zn(2+) is required as a cofactor.

The enzyme catalyses Endonucleolytic cleavage of RNA, removing extra 3' nucleotides from tRNA precursor, generating 3' termini of tRNAs. A 3'-hydroxy group is left at the tRNA terminus and a 5'-phosphoryl group is left at the trailer molecule.. Functionally, zinc phosphodiesterase, which displays some tRNA 3'-processing endonuclease activity. Probably involved in tRNA maturation, by removing a 3'-trailer from precursor tRNA. The sequence is that of Ribonuclease Z from Myxococcus xanthus (strain DK1622).